The primary structure comprises 146 residues: Leghemoglobin 1 (146 aa).

The Globin domain maps to 2–146; it reads GFTEKQEALV…LAAAIKKAMG (145 aa). Tyrosine 29 is subject to Nitrated tyrosine. Serine 44 is a binding site for heme b. Serine 44 bears the Phosphoserine mark. O2 is bound at residue histidine 61. Heme b is bound by residues lysine 64, histidine 93, and lysine 96. Tyrosine 134 is subject to Nitrated tyrosine.

This sequence belongs to the plant globin family. In terms of assembly, monomer. In terms of processing, nitrated in effective nodules and particularly in hypoxic conditions; this mechanism may play a protective role in the symbiosis by buffering toxic peroxynitrite NO(2)(-). Nitration level decrease during nodule senescence. Post-translationally, phosphorylation at Ser-44 disrupts the molecular environment of its porphyrin ring oxygen binding pocket, thus leading to a reduced oxygen consumption and to the delivery of oxygen O(2) to symbiosomes. In terms of tissue distribution, root nodules.

It localises to the cytoplasm. The protein resides in the cytosol. Its subcellular location is the nucleus. Functionally, leghemoglobin that reversibly binds oxygen O(2) through a pentacoordinated heme iron. In root nodules, facilitates the diffusion of oxygen to the bacteroids while preventing the bacterial nitrogenase from being inactivated by buffering dioxygen, nitric oxide and carbon monoxide, and promoting the formation of reactive oxygen species (ROS, e.g. H(2)O(2)). This role is essential for symbiotic nitrogen fixation (SNF). The chain is Leghemoglobin 1 from Medicago truncatula (Barrel medic).